Reading from the N-terminus, the 294-residue chain is Elongation factor Ts (294 aa).

Residues 82 to 85 (TDFV) form an involved in Mg(2+) ion dislocation from EF-Tu region.

It belongs to the EF-Ts family.

It localises to the cytoplasm. In terms of biological role, associates with the EF-Tu.GDP complex and induces the exchange of GDP to GTP. It remains bound to the aminoacyl-tRNA.EF-Tu.GTP complex up to the GTP hydrolysis stage on the ribosome. This is Elongation factor Ts from Psychrobacter arcticus (strain DSM 17307 / VKM B-2377 / 273-4).